The chain runs to 381 residues: Protein pelota homolog (381 aa).

It belongs to the eukaryotic release factor 1 family. Pelota subfamily. In terms of assembly, component of the Pelota-HBS1L complex, also named Dom34-Hbs1 complex, composed of pelo-1 and hbs-1. Requires a divalent metal cation as cofactor.

It localises to the cytoplasm. The protein resides in the nucleus. Its function is as follows. Component of the Pelota-HBS1L complex, a complex that recognizes stalled ribosomes and triggers the No-Go Decay (NGD) pathway. In the Pelota-HBS1L complex, pelo-1 recognizes ribosomes stalled at the 3' end of an mRNA and engages stalled ribosomes by destabilizing mRNA in the mRNA channel. Following ribosome-binding, the Pelota-HBS1L complex promotes the disassembly of stalled ribosomes, followed by degradation of damaged mRNAs as part of the NGD pathway. This Caenorhabditis elegans protein is Protein pelota homolog.